A 249-amino-acid polypeptide reads, in one-letter code: Probable proteasome subunit alpha type-2 (249 aa).

The protein belongs to the peptidase T1A family. As to quaternary structure, the 26S proteasome consists of a 20S proteasome core and two 19S regulatory subunits. The 20S proteasome core is composed of 28 subunits that are arranged in four stacked rings, resulting in a barrel-shaped structure. The two end rings are each formed by seven alpha subunits, and the two central rings are each formed by seven beta subunits. The catalytic chamber with the active sites is on the inside of the barrel.

The protein localises to the cytoplasm. The protein resides in the nucleus. In terms of biological role, the proteasome is a multicatalytic proteinase complex which is characterized by its ability to cleave peptides with Arg, Phe, Tyr, Leu, and Glu adjacent to the leaving group at neutral or slightly basic pH. The proteasome has an ATP-dependent proteolytic activity. The protein is Probable proteasome subunit alpha type-2 (pca-2) of Neurospora crassa (strain ATCC 24698 / 74-OR23-1A / CBS 708.71 / DSM 1257 / FGSC 987).